We begin with the raw amino-acid sequence, 265 residues long: 2-C-methyl-D-erythritol 4-phosphate cytidylyltransferase (265 aa).

The span at 231 to 241 shows a compositional bias: basic and acidic residues; the sequence is DRGGASREAER. A disordered region spans residues 231 to 265; that stretch reads DRGGASREAERSAMPSAATSVFSGARSAASGSEEV. The segment covering 253 to 265 has biased composition (low complexity); it reads SGARSAASGSEEV.

It belongs to the IspD/TarI cytidylyltransferase family. IspD subfamily.

It catalyses the reaction 2-C-methyl-D-erythritol 4-phosphate + CTP + H(+) = 4-CDP-2-C-methyl-D-erythritol + diphosphate. Its pathway is isoprenoid biosynthesis; isopentenyl diphosphate biosynthesis via DXP pathway; isopentenyl diphosphate from 1-deoxy-D-xylulose 5-phosphate: step 2/6. In terms of biological role, catalyzes the formation of 4-diphosphocytidyl-2-C-methyl-D-erythritol from CTP and 2-C-methyl-D-erythritol 4-phosphate (MEP). This is 2-C-methyl-D-erythritol 4-phosphate cytidylyltransferase from Xanthomonas campestris pv. campestris (strain B100).